The sequence spans 431 residues: Serine--tRNA ligase (431 aa).

236-238 (TAE) serves as a coordination point for L-serine. An ATP-binding site is contributed by 267–269 (RSE). E290 is a binding site for L-serine. Residue 354–357 (EISS) participates in ATP binding. S389 lines the L-serine pocket.

It belongs to the class-II aminoacyl-tRNA synthetase family. Type-1 seryl-tRNA synthetase subfamily. In terms of assembly, homodimer. The tRNA molecule binds across the dimer.

Its subcellular location is the cytoplasm. It catalyses the reaction tRNA(Ser) + L-serine + ATP = L-seryl-tRNA(Ser) + AMP + diphosphate + H(+). The catalysed reaction is tRNA(Sec) + L-serine + ATP = L-seryl-tRNA(Sec) + AMP + diphosphate + H(+). The protein operates within aminoacyl-tRNA biosynthesis; selenocysteinyl-tRNA(Sec) biosynthesis; L-seryl-tRNA(Sec) from L-serine and tRNA(Sec): step 1/1. Functionally, catalyzes the attachment of serine to tRNA(Ser). Is also able to aminoacylate tRNA(Sec) with serine, to form the misacylated tRNA L-seryl-tRNA(Sec), which will be further converted into selenocysteinyl-tRNA(Sec). The chain is Serine--tRNA ligase from Herminiimonas arsenicoxydans.